The chain runs to 232 residues: RNA chaperone ProQ (232 aa).

The segment at 105-182 is disordered; the sequence is EAKARVQAQR…REEQHTPVSD (78 aa). A compositionally biased stretch (basic and acidic residues) spans 117–136; that stretch reads QQAKKREAAATAGEKEDAPR. Residues 137-146 are compositionally biased toward basic residues; the sequence is RERKPRPTTP. The segment covering 147 to 177 has biased composition (basic and acidic residues); sequence RRKEGAERKPRAQKPVEKAPKTVKAPREEQH.

This sequence belongs to the ProQ family.

The protein resides in the cytoplasm. Its function is as follows. RNA chaperone with significant RNA binding, RNA strand exchange and RNA duplexing activities. May regulate ProP activity through an RNA-based, post-transcriptional mechanism. The protein is RNA chaperone ProQ of Escherichia coli (strain K12).